The primary structure comprises 130 residues: Small ribosomal subunit protein uS8 (130 aa).

It belongs to the universal ribosomal protein uS8 family. In terms of assembly, part of the 30S ribosomal subunit. Contacts proteins S5 and S12.

Its function is as follows. One of the primary rRNA binding proteins, it binds directly to 16S rRNA central domain where it helps coordinate assembly of the platform of the 30S subunit. This chain is Small ribosomal subunit protein uS8, found in Shewanella baltica (strain OS223).